A 501-amino-acid polypeptide reads, in one-letter code: Pyruvate kinase 1 (501 aa).

Arg50 contacts substrate. Positions 52, 54, 85, and 86 each coordinate K(+). 52–55 contributes to the ATP binding site; sequence NFSH. The ATP site is built by Arg92 and Lys178. Glu243 lines the Mg(2+) pocket. Substrate is bound by residues Gly266, Asp267, and Thr299. Asp267 serves as a coordination point for Mg(2+).

Belongs to the pyruvate kinase family. In terms of assembly, homotetramer. Mg(2+) is required as a cofactor. K(+) serves as cofactor.

It catalyses the reaction pyruvate + ATP = phosphoenolpyruvate + ADP + H(+). Its pathway is carbohydrate degradation; glycolysis; pyruvate from D-glyceraldehyde 3-phosphate: step 5/5. This Candida glabrata (strain ATCC 2001 / BCRC 20586 / JCM 3761 / NBRC 0622 / NRRL Y-65 / CBS 138) (Yeast) protein is Pyruvate kinase 1 (PYK1).